The sequence spans 456 residues: UPF0496 protein 4 (456 aa).

A helical transmembrane segment spans residues 205 to 221 (SVTVFVCSIFVAVLSGS).

The protein belongs to the ROH1 family.

The protein resides in the membrane. The sequence is that of UPF0496 protein 4 from Oryza sativa subsp. indica (Rice).